A 751-amino-acid polypeptide reads, in one-letter code: Cytosolic neutral trehalase (751 aa).

The segment covering 1–15 (MDDSALPSNTSNGIN) has biased composition (polar residues). Disordered stretches follow at residues 1 to 42 (MDDS…NPES) and 64 to 88 (DFHEMLGDRNTRRGSMDPTSGNPRK). Basic and acidic residues predominate over residues 64 to 78 (DFHEMLGDRNTRRGS). Ca(2+)-binding residues include D105, D107, N109, Q111, and D116. Residues R292, 299–300 (WD), N336, 345–347 (RSQ), E412, R461, and G464 contribute to the substrate site. Catalysis depends on proton donor/acceptor residues D466 and E670.

This sequence belongs to the glycosyl hydrolase 37 family. Ca(2+) is required as a cofactor.

It localises to the cytoplasm. It carries out the reaction alpha,alpha-trehalose + H2O = alpha-D-glucose + beta-D-glucose. It functions in the pathway carbohydrate degradation. Its activity is regulated as follows. Activated by calcium. Its function is as follows. Hydrolyzes intracellular trehalose to glucose. The disaccharide trehalose serves as a storage carbohydrate that is mobilized during conidial germination. Regulates the level of trehalose as a protectant for cell integrity during heat stress. This chain is Cytosolic neutral trehalase, found in Emericella nidulans (strain FGSC A4 / ATCC 38163 / CBS 112.46 / NRRL 194 / M139) (Aspergillus nidulans).